A 141-amino-acid polypeptide reads, in one-letter code: Hemoglobin subunit alpha (141 aa).

The region spanning 1-141 (VLSDKDKTNV…VSTVLTSKYR (141 aa)) is the Globin domain. Ser-3 is subject to Phosphoserine. Lys-7 is subject to N6-succinyllysine. Thr-8 is subject to Phosphothreonine. Lys-11 carries the N6-succinyllysine modification. Lys-16 bears the N6-acetyllysine; alternate mark. Residue Lys-16 is modified to N6-succinyllysine; alternate. Residue Tyr-24 is modified to Phosphotyrosine. Ser-35 carries the phosphoserine modification. Lys-40 carries the post-translational modification N6-succinyllysine. A Phosphoserine modification is found at Ser-49. Residue His-58 coordinates O2. His-87 is a heme b binding site. At Ser-102 the chain carries Phosphoserine. A Phosphothreonine modification is found at Thr-108. Ser-124 carries the post-translational modification Phosphoserine. Residues Thr-134 and Thr-137 each carry the phosphothreonine modification. Ser-138 is subject to Phosphoserine.

It belongs to the globin family. Heterotetramer of two alpha chains and two beta chains. In terms of tissue distribution, red blood cells.

Involved in oxygen transport from the lung to the various peripheral tissues. Functionally, hemopressin acts as an antagonist peptide of the cannabinoid receptor CNR1. Hemopressin-binding efficiently blocks cannabinoid receptor CNR1 and subsequent signaling. The sequence is that of Hemoglobin subunit alpha (HBA) from Elephas maximus (Indian elephant).